Reading from the N-terminus, the 164-residue chain is B-phycoerythrin alpha chain (164 aa).

(2R,3E)-phycoerythrobilin-binding residues include Cys-82 and Cys-139.

This sequence belongs to the phycobiliprotein family. As to quaternary structure, heteromer of 6 alpha, 6 beta and one gamma chain. Post-translationally, contains two covalently linked bilin chromophores.

It localises to the plastid. The protein localises to the chloroplast thylakoid membrane. Functionally, light-harvesting photosynthetic bile pigment-protein from the phycobiliprotein complex. This is B-phycoerythrin alpha chain (cpeA) from Porphyridium sordidum (Red alga).